The following is an 842-amino-acid chain: Serine/threonine-protein kinase CLA4 (842 aa).

The tract at residues 12–34 is disordered; sequence DNDFQNIGPAPRPPSSNSQGRTC. Phosphoserine is present on residues Ser-29 and Ser-46. A PH domain is found at 61-179; that stretch reads SKKKSGWVSY…WLDAIFAKCP (119 aa). One can recognise a CRIB domain in the interval 184-197; sequence VSSPTNFTHKVHVG. Positions 247-274 are enriched in polar residues; it reads GNPTNTLDKPQSGETSSSQKSLPNSYND. Positions 247-524 are disordered; that stretch reads GNPTNTLDKP…KPKKPARPTM (278 aa). Residues 279–296 are compositionally biased toward low complexity; that stretch reads NNSVNSKSSSGVSSSMVS. The segment covering 297 to 307 has biased composition (polar residues); that stretch reads QRKTSQPPNTK. Positions 308–319 are enriched in low complexity; that stretch reads SPVSLGSGSLPP. Polar residues predominate over residues 323 to 343; the sequence is KLPTSQSNIPRHLQNVPNQQY. Phosphoserine occurs at positions 351 and 367. The span at 372–387 shows a compositional bias: low complexity; the sequence is QQQQQQQQQQKQQHQQ. A compositionally biased stretch (pro residues) spans 396–408; the sequence is SPSPSPSPSPLNP. The span at 418 to 435 shows a compositional bias: low complexity; the sequence is PYSKQPQSPLSSQSTQNQ. Ser-425 carries the post-translational modification Phosphoserine. Composition is skewed to polar residues over residues 470-481 and 488-497; these read PSNQNATSNTHV and NDQSTPQTMR. Residues 546–825 form the Protein kinase domain; sequence FKVIEKAGQG…TEELLHHGFF (280 aa). ATP contacts are provided by residues 552–560 and Lys-594; that span reads AGQGASGSV. Asp-693 (proton acceptor) is an active-site residue.

The protein belongs to the protein kinase superfamily. STE Ser/Thr protein kinase family. STE20 subfamily. In terms of assembly, interacts with CDC42.

The catalysed reaction is L-seryl-[protein] + ATP = O-phospho-L-seryl-[protein] + ADP + H(+). It carries out the reaction L-threonyl-[protein] + ATP = O-phospho-L-threonyl-[protein] + ADP + H(+). Functionally, involved in budding and cytokinesis. The sequence is that of Serine/threonine-protein kinase CLA4 (CLA4) from Saccharomyces cerevisiae (strain ATCC 204508 / S288c) (Baker's yeast).